The chain runs to 39 residues: TIINVKCTSPKQCLPPCKAQFGQSAGAKCMNGKCKCYPH.

3 disulfide bridges follow: cysteine 7/cysteine 29, cysteine 13/cysteine 34, and cysteine 17/cysteine 36. The tract at residues 37–39 is interaction with Kv1.3 channels; sequence YPH.

It belongs to the short scorpion toxin superfamily. Potassium channel inhibitor family. Alpha-KTx 02 subfamily. As to expression, expressed by the venom gland.

The protein resides in the secreted. Its function is as follows. Potent inhibitor of voltage-gated potassium channels such as Kv1.1/KCNA1 (IC(50)=0.144 nM), Kv1.2/KCNA2 (IC(50)=0.675 nM), Kv1.3/KCNA3 (IC(50)=0.23 nM) and Shaker (Kd=160 nM). Suppresses expression of the Kv1.3/KCNA3 channel in lipopolysaccharide (LPS)-stimulated mouse macrophages. Down-regulates secretion of nitric oxide (NO) and inflammatory cytokines, such as TNF-alpha/TNF, IL-1beta/IL1B and IL6, in LPS-stimulated mouse macrophages in a manner dependent on Kv1.3/KCNA3 channel blockage. Reduces activation of MAPK and NF-kappa-B signaling pathways in LPS-stimulated mouse macrophages. Modulates intracellular Ca(2+) signaling in human PMA/ionomycin-triggered T-cells. Interferes with the activation of the MAPK, NF-kappa-B and NFATc1 pathways in human PMA/ionomycin-triggered T-cells. Reduces proliferation of human PMA/ionomycin-triggered T-cells. Down-regulates secretion of cytokines, such as TNF-alpha/TNF and IL2, in human PMA/ionomycin-triggered T-cells. This is Potassium channel toxin alpha-KTx 2.2 from Centruroides margaritatus (Central American bark Scorpion).